A 795-amino-acid polypeptide reads, in one-letter code: Delta-1-pyrroline-5-carboxylate synthase (795 aa).

The interval 1–361 is glutamate 5-kinase; it reads MLRHMHRSGV…FFSEVKPAGP (361 aa). Substrate is bound by residues Ser-117, Asp-223, and Asn-246. ATP-binding positions include 266–267 and 305–311; these read SD and LGGMEAK. N6-succinyllysine occurs at positions 311, 347, and 550. Residues 362–795 are gamma-glutamyl phosphate reductase; that stretch reads TVEQQGEMAR…NLPVPQRNFS (434 aa).

The protein in the N-terminal section; belongs to the glutamate 5-kinase family. This sequence in the C-terminal section; belongs to the gamma-glutamyl phosphate reductase family. Can form homodimers/multimers.

The protein localises to the mitochondrion matrix. The enzyme catalyses L-glutamate + ATP = L-glutamyl 5-phosphate + ADP. It catalyses the reaction L-glutamate 5-semialdehyde + phosphate + NADP(+) = L-glutamyl 5-phosphate + NADPH + H(+). The protein operates within amino-acid biosynthesis; L-proline biosynthesis; L-glutamate 5-semialdehyde from L-glutamate: step 1/2. It participates in amino-acid biosynthesis; L-proline biosynthesis; L-glutamate 5-semialdehyde from L-glutamate: step 2/2. Isoform Short: Inhibited by L-ornithine with a Ki of approximately 0.25 mm. Isoform Long: Insensitive to ornithine inhibition. Thus, the two amino acid insert in the long isoform abolishes feedback inhibition of P5CS activity by L-ornithine. Bifunctional enzyme that converts glutamate to glutamate 5-semialdehyde, an intermediate in the biosynthesis of proline, ornithine and arginine. This chain is Delta-1-pyrroline-5-carboxylate synthase (Aldh18a1), found in Mus musculus (Mouse).